Here is a 570-residue protein sequence, read N- to C-terminus: Urease subunit alpha (570 aa).

In terms of domain architecture, Urease spans Gly-131–Tyr-570. Residues His-136, His-138, and Lys-219 each contribute to the Ni(2+) site. Position 219 is an N6-carboxylysine (Lys-219). A substrate-binding site is contributed by His-221. Ni(2+) is bound by residues His-248 and His-274. Catalysis depends on His-322, which acts as the Proton donor. Asp-362 serves as a coordination point for Ni(2+).

It belongs to the metallo-dependent hydrolases superfamily. Urease alpha subunit family. Heterotrimer of UreA (gamma), UreB (beta) and UreC (alpha) subunits. Three heterotrimers associate to form the active enzyme. Ni cation serves as cofactor. Carboxylation allows a single lysine to coordinate two nickel ions.

Its subcellular location is the cytoplasm. It catalyses the reaction urea + 2 H2O + H(+) = hydrogencarbonate + 2 NH4(+). It participates in nitrogen metabolism; urea degradation; CO(2) and NH(3) from urea (urease route): step 1/1. This Rhodopseudomonas palustris (strain BisB18) protein is Urease subunit alpha.